The following is a 384-amino-acid chain: Acetylornithine aminotransferase (384 aa).

Residues glycine 94–threonine 95 and phenylalanine 121 contribute to the pyridoxal 5'-phosphate site. Arginine 124 contacts N(2)-acetyl-L-ornithine. Aspartate 206–glutamine 209 is a pyridoxal 5'-phosphate binding site. The residue at position 235 (lysine 235) is an N6-(pyridoxal phosphate)lysine. Serine 263 is a binding site for N(2)-acetyl-L-ornithine. Position 264 (threonine 264) interacts with pyridoxal 5'-phosphate.

The protein belongs to the class-III pyridoxal-phosphate-dependent aminotransferase family. ArgD subfamily. As to quaternary structure, homodimer. Pyridoxal 5'-phosphate serves as cofactor.

It is found in the cytoplasm. It carries out the reaction N(2)-acetyl-L-ornithine + 2-oxoglutarate = N-acetyl-L-glutamate 5-semialdehyde + L-glutamate. It participates in amino-acid biosynthesis; L-arginine biosynthesis; N(2)-acetyl-L-ornithine from L-glutamate: step 4/4. The sequence is that of Acetylornithine aminotransferase from Listeria innocua serovar 6a (strain ATCC BAA-680 / CLIP 11262).